The following is a 710-amino-acid chain: Adenylosuccinate synthetase (710 aa).

Disordered stretches follow at residues 1-51 (MPVR…PVPQ) and 84-111 (DEPP…GRSK). Polar residues-rich tracts occupy residues 10-27 (YNNS…STTA) and 101-111 (ANASSSSGRSK). GTP contacts are provided by residues 180–186 (GDEGKGK) and 210–212 (GHT). Aspartate 181 (proton acceptor) is an active-site residue. Residues aspartate 181 and glycine 210 each coordinate Mg(2+). Residues 181-184 (DEGK), 208-211 (NAGH), threonine 295, lysine 309, glutamine 421, threonine 437, and lysine 567 each bind IMP. Catalysis depends on histidine 211, which acts as the Proton donor. 563-569 (AVTKKPR) is a substrate binding site. Residues arginine 569 and 697–699 (GNG) each bind GTP.

This sequence belongs to the adenylosuccinate synthetase family. Homodimer. It depends on Mg(2+) as a cofactor.

The protein resides in the cytoplasm. It catalyses the reaction IMP + L-aspartate + GTP = N(6)-(1,2-dicarboxyethyl)-AMP + GDP + phosphate + 2 H(+). It functions in the pathway purine metabolism; AMP biosynthesis via de novo pathway; AMP from IMP: step 1/2. Functionally, plays an important role in the salvage pathway for purine nucleotide biosynthesis. Catalyzes the first committed step in the biosynthesis of AMP from IMP. The polypeptide is Adenylosuccinate synthetase (Leishmania infantum).